The chain runs to 399 residues: MNIHEYQAKELLAKFGVAVPAGHAALTVDEAVEAAKKLPGPIWVVKAQIHAGGRGKGKFKELPADAKGGVRLSKSIDEVKANAADMLGNTLVTIQTGEAGKQVNRLYVTDGADIKSEYYLSMLVDRKTGRIAMIVSTEGGMDIEQVAHDTPEKIRTIVIDPAEGFQPHHGRAVAFALKLKGDLNKQAVKLAEQLYNAFIATDMSMLEVNPLVETTDGKLLVLDAKVSFDSNALYRHPDILALRDETEEDPAEIEASQYDLAYIKLDGDIGCMVNGAGLAMATMDIIKLNGMFPANFLDVGGGATKEKVTAAFKIILSDPAVKGILVNIFGGIMRCDIIAEGIIAAAKEVNLSVPLVVRLEGTNVQQGKDLLAGSGLPIVAADDLGDAARKIVAEVKKAA.

An ATP-grasp domain is found at 9 to 254 (KELLAKFGVA…ETEEDPAEIE (246 aa)). Residues Lys-46, 53-55 (GRG), Ala-112, and Glu-117 contribute to the ATP site. Asn-209 and Asp-223 together coordinate Mg(2+). Substrate-binding positions include Asn-274 and 331-333 (GIM).

This sequence belongs to the succinate/malate CoA ligase beta subunit family. As to quaternary structure, heterotetramer of two alpha and two beta subunits. Mg(2+) is required as a cofactor.

It catalyses the reaction succinate + ATP + CoA = succinyl-CoA + ADP + phosphate. The enzyme catalyses GTP + succinate + CoA = succinyl-CoA + GDP + phosphate. Its pathway is carbohydrate metabolism; tricarboxylic acid cycle; succinate from succinyl-CoA (ligase route): step 1/1. Succinyl-CoA synthetase functions in the citric acid cycle (TCA), coupling the hydrolysis of succinyl-CoA to the synthesis of either ATP or GTP and thus represents the only step of substrate-level phosphorylation in the TCA. The beta subunit provides nucleotide specificity of the enzyme and binds the substrate succinate, while the binding sites for coenzyme A and phosphate are found in the alpha subunit. The protein is Succinate--CoA ligase [ADP-forming] subunit beta of Rhizorhabdus wittichii (strain DSM 6014 / CCUG 31198 / JCM 15750 / NBRC 105917 / EY 4224 / RW1) (Sphingomonas wittichii).